The chain runs to 81 residues: Toxin-like peptide AaF1CA5 (81 aa).

Residues 1–22 (MMKLMLFSIIVILFSLIGSIHG) form the signal peptide. Residues 25–81 (VPGNYPLDSSDDTYLCAPLGENPFCIKICRKHGVKYGLMLRLPCWCEYFGKIKNVKI) enclose the LCN-type CS-alpha/beta domain. 2 disulfides stabilise this stretch: Cys49-Cys68 and Cys53-Cys70.

The protein belongs to the long (3 C-C) scorpion toxin superfamily. As to expression, expressed by the venom gland.

It localises to the secreted. In terms of biological role, probable neurotoxin that inhibits ion channels. The polypeptide is Toxin-like peptide AaF1CA5 (Androctonus australis (Sahara scorpion)).